We begin with the raw amino-acid sequence, 93 residues long: Beta-defensin 128 (93 aa).

The N-terminal stretch at 1-18 (MKLFLVLIILLFEVLTDG) is a signal peptide. 3 cysteine pairs are disulfide-bonded: Cys24–Cys52, Cys32–Cys46, and Cys36–Cys53.

It belongs to the beta-defensin family.

It localises to the secreted. Its function is as follows. Has antibacterial activity. The polypeptide is Beta-defensin 128 (DEFB128) (Macaca fascicularis (Crab-eating macaque)).